Consider the following 240-residue polypeptide: Demethylmenaquinone methyltransferase (240 aa).

Residues threonine 62, aspartate 80, 102–103, and serine 119 contribute to the S-adenosyl-L-methionine site; that span reads DA.

This sequence belongs to the class I-like SAM-binding methyltransferase superfamily. MenG/UbiE family.

The catalysed reaction is a 2-demethylmenaquinol + S-adenosyl-L-methionine = a menaquinol + S-adenosyl-L-homocysteine + H(+). The protein operates within quinol/quinone metabolism; menaquinone biosynthesis; menaquinol from 1,4-dihydroxy-2-naphthoate: step 2/2. In terms of biological role, methyltransferase required for the conversion of demethylmenaquinol (DMKH2) to menaquinol (MKH2). In Beutenbergia cavernae (strain ATCC BAA-8 / DSM 12333 / CCUG 43141 / JCM 11478 / NBRC 16432 / NCIMB 13614 / HKI 0122), this protein is Demethylmenaquinone methyltransferase.